Consider the following 369-residue polypeptide: Iron-sulfur cluster assembly SufBD family protein AF_2365 (369 aa).

The protein belongs to the iron-sulfur cluster assembly SufBD family.

The protein is Iron-sulfur cluster assembly SufBD family protein AF_2365 of Archaeoglobus fulgidus (strain ATCC 49558 / DSM 4304 / JCM 9628 / NBRC 100126 / VC-16).